We begin with the raw amino-acid sequence, 540 residues long: Malolactic enzyme (540 aa).

The active-site Proton donor is the Tyr-90. Lys-163 serves as the catalytic Proton acceptor. Lys-163 contributes to the substrate binding site. Positions 234, 235, and 258 each coordinate Mn(2+). NAD(+)-binding positions include 291–294 (GGSA), Asn-403, and Asn-448. Position 448 (Asn-448) interacts with substrate.

This sequence belongs to the malic enzymes family. Homodimer. Requires Mn(2+) as cofactor. It depends on NAD(+) as a cofactor.

It carries out the reaction (S)-malate + H(+) = (S)-lactate + CO2. Involved in the malolactic fermentation (MLF) of wine, which results in a natural decrease in acidity and favorable changes in wine flavors. Catalyzes the decarboxylation of L-malate to L-lactate. This chain is Malolactic enzyme, found in Lactococcus lactis subsp. lactis (strain IL1403) (Streptococcus lactis).